A 27-amino-acid polypeptide reads, in one-letter code: Delta-conotoxin TsVIA (27 aa).

3 cysteine pairs are disulfide-bonded: C1-C17, C8-C21, and C16-C25.

Belongs to the conotoxin O1 superfamily. Expressed by the venom duct.

The protein localises to the secreted. Delta-conotoxins bind to site 6 of voltage-gated sodium channels (Nav) and inhibit the inactivation process. This toxin inhibits tetrodotoxin(TTX)-sensitive sodium channels. A test on mouse Nav1.6/SCN8A confirms this sensitivity. This is Delta-conotoxin TsVIA from Conus tessulatus (Tessellate cone).